A 702-amino-acid polypeptide reads, in one-letter code: Archaeal Lon protease (702 aa).

The segment at 1–63 (MSNESTNDAP…VGVEGDVSID (63 aa)) is disordered. The Cytoplasmic segment spans residues 1 to 183 (MSNESTNDAP…EARKRNQMRS (183 aa)). The segment covering 10 to 48 (PPDDDPDDPEPSVDHDDTDGLQDDPADSVDDAGEVDDLE) has biased composition (acidic residues). An ATP-binding site is contributed by 117 to 124 (GSPGTGKS). The helical transmembrane segment at 184–201 (FLMWIMILLAVGYALLIA) threads the bilayer. Residues 202–206 (TPARP) are Extracellular-facing. A helical membrane pass occupies residues 207–223 (LLALLSAAGIYLLFRYT). The Cytoplasmic segment spans residues 224–702 (NRGSDAMVPK…GTTGGNPSPQ (479 aa)). The 181-residue stretch at 487–667 (EEAVGRVNGL…SEVLDVALVG (181 aa)) folds into the Lon proteolytic domain. Active-site residues include Ser574 and Lys617.

It belongs to the peptidase S16 family. Archaeal LonB subfamily. In terms of assembly, homohexamer. Organized in a ring with a central cavity.

Its subcellular location is the cell membrane. Its function is as follows. ATP-dependent serine protease that mediates the selective degradation of mutant and abnormal proteins as well as certain short-lived regulatory proteins. Degrades polypeptides processively. This Halobacterium salinarum (strain ATCC 700922 / JCM 11081 / NRC-1) (Halobacterium halobium) protein is Archaeal Lon protease.